Reading from the N-terminus, the 471-residue chain is Phosphoglycerate kinase (471 aa).

Residues 24-26, Arg-41, 64-67, Arg-127, and Arg-169 each bind substrate; these read DFN and HLSR. Residues Lys-220, Gly-307, Glu-338, and 368–371 each bind ATP; that span reads GGDS. The tract at residues 417 to 471 is disordered; sequence KVEAVKEKTTTTTESASKEKSSTAKTASKPATSKTTAAKKPAEKKPAAKKPAAKK. The segment covering 439–455 has biased composition (low complexity); that stretch reads TAKTASKPATSKTTAAK.

It belongs to the phosphoglycerate kinase family. Monomer.

It is found in the cytoplasm. The catalysed reaction is (2R)-3-phosphoglycerate + ATP = (2R)-3-phospho-glyceroyl phosphate + ADP. It functions in the pathway carbohydrate degradation; glycolysis; pyruvate from D-glyceraldehyde 3-phosphate: step 2/5. This chain is Phosphoglycerate kinase, found in Malacoplasma penetrans (strain HF-2) (Mycoplasma penetrans).